Reading from the N-terminus, the 356-residue chain is Dihydroorotate dehydrogenase (quinone) (356 aa).

FMN is bound by residues 66-70 (AGFDK) and threonine 90. Lysine 70 is a binding site for substrate. 115 to 119 (NRMGF) is a binding site for substrate. 2 residues coordinate FMN: asparagine 143 and asparagine 176. Asparagine 176 contributes to the substrate binding site. Serine 179 (nucleophile) is an active-site residue. Substrate is bound at residue asparagine 181. FMN is bound by residues lysine 212 and threonine 240. A substrate-binding site is contributed by 241-242 (NT). FMN-binding positions include glycine 264, glycine 293, and 314-315 (YT).

The protein belongs to the dihydroorotate dehydrogenase family. Type 2 subfamily. In terms of assembly, monomer. FMN is required as a cofactor.

The protein resides in the cell membrane. The catalysed reaction is (S)-dihydroorotate + a quinone = orotate + a quinol. It participates in pyrimidine metabolism; UMP biosynthesis via de novo pathway; orotate from (S)-dihydroorotate (quinone route): step 1/1. Its function is as follows. Catalyzes the conversion of dihydroorotate to orotate with quinone as electron acceptor. The sequence is that of Dihydroorotate dehydrogenase (quinone) (pyrD) from Mycobacterium leprae (strain TN).